We begin with the raw amino-acid sequence, 222 residues long: Mediator of RNA polymerase II transcription subunit 7 (222 aa).

Positions 34–55 (YKEKKAASAKQTAPNNSNGGSE) are disordered. The span at 42–53 (AKQTAPNNSNGG) shows a compositional bias: polar residues.

This sequence belongs to the Mediator complex subunit 7 family. As to quaternary structure, component of the Mediator complex, which is composed of at least 21 subunits that form three structurally distinct submodules. The Mediator head module contains MED6, MED8, MED11, SRB4/MED17, SRB5/MED18, ROX3/MED19, SRB2/MED20 and SRB6/MED22, the middle module contains MED1, MED4, NUT1/MED5, MED7, CSE2/MED9, NUT2/MED10, SRB7/MED21 and SOH1/MED31, and the tail module contains MED2, PGD1/MED3, RGR1/MED14, GAL11/MED15 and SIN4/MED16. The head and the middle modules interact directly with RNA polymerase II, whereas the elongated tail module interacts with gene-specific regulatory proteins. MED7 interacts directly with MED1, MED4 and SRB7/MED21.

The protein resides in the nucleus. Its function is as follows. Component of the Mediator complex, a coactivator involved in the regulated transcription of nearly all RNA polymerase II-dependent genes. Mediator functions as a bridge to convey information from gene-specific regulatory proteins to the basal RNA polymerase II transcription machinery. The Mediator complex, having a compact conformation in its free form, is recruited to promoters by direct interactions with regulatory proteins and serves for the assembly of a functional preinitiation complex with RNA polymerase II and the general transcription factors. The Mediator complex unfolds to an extended conformation and partially surrounds RNA polymerase II, specifically interacting with the unphosphorylated form of the C-terminal domain (CTD) of RNA polymerase II. The Mediator complex dissociates from the RNA polymerase II holoenzyme and stays at the promoter when transcriptional elongation begins. The protein is Mediator of RNA polymerase II transcription subunit 7 (MED7) of Saccharomyces cerevisiae (strain ATCC 204508 / S288c) (Baker's yeast).